The following is a 557-amino-acid chain: MTKEKTLPLPRSECICPICQEILLEPVTLPCKHTLCNPCFQMTVEKASLCCPFCRKRVSTWARLHSRTRTLVNTELWERIQKQYPKECQRRASGQESDDLADELASCPAPLLCQPGEIRQEYEAEVSKIEAERLAQEEAERKASEDYIQKLLAEEAAQDRLHSEAVQREMEEQLKIDEELARTLSVDLDVSNASCSSVSSVTSKKVVVSKSSKNVKNKQRVSGDIERFLTPRAVAVVGIDESMNSDSSECFIVFDEGEDEMPELSPQCPSTSLIQERGVELIMPYLSDCYKVESNTTSQQDRCSERSQVCNGTYSSCSDSIDMEESMAIKKQSTTAGLFPERGYHSPENGMESNTMNCSTPKHLGMTGTLKRKCEDCSIDLEEKAGSCRNVKKKKLSLTEDCPVPSVHAGKLIELEENLYERRRQEEQDRLLALQLQRELDKELKQVNRGKGSPDEYELRTKRGLKLQECLKLQECQDSPLPLRKEIPVQDNSRNTQSEYSPDENKKPSRKNSVRSARVRQSRAVANTEGSSDGINVLKPINKQPTILDLFQRSAGK.

The RING-type zinc-finger motif lies at 16-55 (CPICQEILLEPVTLPCKHTLCNPCFQMTVEKASLCCPFCR). The LR motif 1 motif lies at 112–130 (LCQPGEIRQEYEAEVSKIE). The short motif at 145–153 (EDYIQKLLA) is the UMI motif element. 2 consecutive short sequence motifs (MIU motif) follow at residues 170 to 193 (MEEQ…VSNA) and 422 to 445 (RRRQ…KELK). The LR motif 2 signature appears at 449–460 (RGKGSPDEYELR). A disordered region spans residues 482 to 543 (PLRKEIPVQD…GINVLKPINK (62 aa)). Residues 490–500 (QDNSRNTQSEY) show a composition bias toward polar residues. The span at 508-521 (PSRKNSVRSARVRQ) shows a compositional bias: basic residues.

It belongs to the RNF168 family. In terms of assembly, monomer.

It localises to the nucleus. It catalyses the reaction S-ubiquitinyl-[E2 ubiquitin-conjugating enzyme]-L-cysteine + [acceptor protein]-L-lysine = [E2 ubiquitin-conjugating enzyme]-L-cysteine + N(6)-ubiquitinyl-[acceptor protein]-L-lysine.. The protein operates within protein modification; protein ubiquitination. In terms of biological role, E3 ubiquitin-protein ligase required for accumulation of repair proteins to sites of DNA damage. Acts with ube2n/ubc13 to amplify the rnf8-dependent histone ubiquitination. Recruited to sites of DNA damage at double-strand breaks (DSBs) by binding to ubiquitinated histone H2A and ubiquitinates histone H2A and H2AX, leading to amplify the rnf8-dependent H2A ubiquitination and promoting the formation of 'Lys-63'-linked ubiquitin conjugates. This leads to concentrate ubiquitinated histones H2A and H2AX at DNA lesions to the threshold required for recruitment of tp53bp1 and brca1. Catalyzes monoubiquitination of 'Lys-13' and 'Lys-15' of nucleosomal histone H2A (H2AK13Ub and H2AK15Ub, respectively). The polypeptide is E3 ubiquitin-protein ligase rnf168 (Xenopus laevis (African clawed frog)).